Here is a 529-residue protein sequence, read N- to C-terminus: ATP synthase subunit alpha (529 aa).

Position 173-180 (173-180 (GDRQTGKT)) interacts with ATP.

The protein belongs to the ATPase alpha/beta chains family. F-type ATPases have 2 components, CF(1) - the catalytic core - and CF(0) - the membrane proton channel. CF(1) has five subunits: alpha(3), beta(3), gamma(1), delta(1), epsilon(1). CF(0) has three main subunits: a(1), b(2) and c(9-12). The alpha and beta chains form an alternating ring which encloses part of the gamma chain. CF(1) is attached to CF(0) by a central stalk formed by the gamma and epsilon chains, while a peripheral stalk is formed by the delta and b chains.

Its subcellular location is the cell membrane. It carries out the reaction ATP + H2O + 4 H(+)(in) = ADP + phosphate + 5 H(+)(out). Its function is as follows. Produces ATP from ADP in the presence of a proton gradient across the membrane. The alpha chain is a regulatory subunit. The polypeptide is ATP synthase subunit alpha (Streptomyces avermitilis (strain ATCC 31267 / DSM 46492 / JCM 5070 / NBRC 14893 / NCIMB 12804 / NRRL 8165 / MA-4680)).